The sequence spans 150 residues: Ribosome maturation factor RimP (150 aa).

This sequence belongs to the RimP family.

It localises to the cytoplasm. Functionally, required for maturation of 30S ribosomal subunits. This chain is Ribosome maturation factor RimP, found in Hahella chejuensis (strain KCTC 2396).